Here is an 804-residue protein sequence, read N- to C-terminus: Phenylalanine--tRNA ligase beta subunit (804 aa).

In terms of domain architecture, tRNA-binding spans 39-147 (GEGLDSVVTA…PDCEPGQPVF (109 aa)). The 80-residue stretch at 401-480 (LAERKVTLAV…RLNGYDNIPV (80 aa)) folds into the B5 domain. Mg(2+) is bound by residues Asp458, Asp464, Glu467, and Glu468. The FDX-ACB domain maps to 711 to 804 (SRFPQVARDS…LIAKLGAEIR (94 aa)).

It belongs to the phenylalanyl-tRNA synthetase beta subunit family. Type 1 subfamily. As to quaternary structure, tetramer of two alpha and two beta subunits. Mg(2+) serves as cofactor.

It localises to the cytoplasm. It catalyses the reaction tRNA(Phe) + L-phenylalanine + ATP = L-phenylalanyl-tRNA(Phe) + AMP + diphosphate + H(+). In Syntrophotalea carbinolica (strain DSM 2380 / NBRC 103641 / GraBd1) (Pelobacter carbinolicus), this protein is Phenylalanine--tRNA ligase beta subunit.